A 161-amino-acid polypeptide reads, in one-letter code: Large ribosomal subunit protein uL30m (161 aa).

A mitochondrion-targeting transit peptide spans 1-34 (MAGILRLVVQWPPGRLQTVTKGVESLICTDWIRH).

It belongs to the universal ribosomal protein uL30 family. Component of the mitochondrial large ribosomal subunit (mt-LSU). Mature mammalian 55S mitochondrial ribosomes consist of a small (28S) and a large (39S) subunit. The 28S small subunit contains a 12S ribosomal RNA (12S mt-rRNA) and 30 different proteins. The 39S large subunit contains a 16S rRNA (16S mt-rRNA), a copy of mitochondrial valine transfer RNA (mt-tRNA(Val)), which plays an integral structural role, and 52 different proteins.

It localises to the mitochondrion. The sequence is that of Large ribosomal subunit protein uL30m (MRPL30) from Homo sapiens (Human).